Reading from the N-terminus, the 184-residue chain is CASP-like protein 1U2 (184 aa).

Over 1-16 (MSYGCQVSDDEPNGSK) the chain is Cytoplasmic. The helical transmembrane segment at 17-37 (AVSLLLRLSTLALALTSAVVM) threads the bilayer. Over 38–62 (ATASECTVVQLNGVVATITYKDFPP) the chain is Extracellular. A helical transmembrane segment spans residues 63-83 (FVYLVGFNIAAAMLEAAAIYL). At 84–100 (RLSTGGGDDDDEGFKGK) the chain is on the cytoplasmic side. A helical membrane pass occupies residues 101 to 121 (LPGILLVVIDVAVQALVYTAT). Residues 122–153 (GGAFAAVSAYGPQINACGAGAGRFCGQVHQSK) are Extracellular-facing. Residues 154–174 (LLSFAGSAAVGLAVVFRDVSL) traverse the membrane as a helical segment. Residues 175–184 (PFSLWPTSSD) are Cytoplasmic-facing.

It belongs to the Casparian strip membrane proteins (CASP) family. Homodimer and heterodimers.

Its subcellular location is the cell membrane. The protein is CASP-like protein 1U2 of Oryza sativa subsp. japonica (Rice).